The following is an 875-amino-acid chain: GATOR2 complex protein MIOS (875 aa).

WD repeat units lie at residues 58 to 100 (SDTP…NSKF), 111 to 155 (KHAR…TPDI), 182 to 221 (GQNDACLSLCWLPRDQKLLLAGMHRNLAIFDLRNTSQKMF), 223 to 261 (NTKAVQGVTVDPYFHDRVASFYEGQVAIWDLRKFEKPVL), 265 to 306 (EQPK…TPIG), and 395 to 437 (RLRA…KQYT). Residues 735–781 (VSCNFCGKSISYSCSAVPHQGRGFSQYGVSGSPTKSKVTSCPGCRKP) form a C4-type zinc finger. The Zn(2+) site is built by C737 and C740. 2 positions are modified to phosphoserine: S759 and S766. C775, C778, C788, C827, C830, H832, H835, H838, C849, C854, and C858 together coordinate Zn(2+). An RING-type; atypical zinc finger spans residues 782-863 (LPRCALCLIN…CTCKCMQLDT (82 aa)).

The protein belongs to the WD repeat mio family. As to quaternary structure, component of the GATOR2 subcomplex, composed of MIOS, SEC13, SEH1L, WDR24 and WDR59. The GATOR2 complex interacts with CASTOR1 and CASTOR2; the interaction is negatively regulated by arginine. CASTOR1 and CASTOR2 convey leucine availability via direct interaction with MIOS. The GATOR2 complex interacts with SESN1, SESN2 and SESN3; the interaction is negatively regulated by amino acids. Interacts with SAR1A and SAR1B; the interaction is direct, disrupted by leucine and mediates the interaction of SAR1A or SAR1B with the GATOR2 complex to negatively regulate the TORC1 signaling upon leucine deprivation.

Its subcellular location is the lysosome membrane. With respect to regulation, the GATOR2 complex is negatively regulated by the upstream amino acid sensors CASTOR1 and SESN2, which sequester the GATOR2 complex in absence of amino acids. In the presence of abundant amino acids, GATOR2 is released from CASTOR1 and SESN2 and activated. Functionally, as a component of the GATOR2 complex, functions as an activator of the amino acid-sensing branch of the mTORC1 signaling pathway. The GATOR2 complex indirectly activates mTORC1 through the inhibition of the GATOR1 subcomplex. GATOR2 probably acts as an E3 ubiquitin-protein ligase toward GATOR1. In the presence of abundant amino acids, the GATOR2 complex mediates ubiquitination of the NPRL2 core component of the GATOR1 complex, leading to GATOR1 inactivation. In the absence of amino acids, GATOR2 is inhibited, activating the GATOR1 complex. Within the GATOR2 complex, MIOS is required to prevent autoubiquitination of WDR24, the catalytic subunit of the complex. The GATOR2 complex is required for brain myelination. This Homo sapiens (Human) protein is GATOR2 complex protein MIOS.